A 201-amino-acid chain; its full sequence is Large ribosomal subunit protein uL4 (201 aa).

Residues Gln46–Gly71 are disordered.

It belongs to the universal ribosomal protein uL4 family. As to quaternary structure, part of the 50S ribosomal subunit.

Functionally, one of the primary rRNA binding proteins, this protein initially binds near the 5'-end of the 23S rRNA. It is important during the early stages of 50S assembly. It makes multiple contacts with different domains of the 23S rRNA in the assembled 50S subunit and ribosome. Forms part of the polypeptide exit tunnel. This chain is Large ribosomal subunit protein uL4, found in Shewanella woodyi (strain ATCC 51908 / MS32).